Consider the following 1260-residue polypeptide: ATP-dependent helicase/deoxyribonuclease subunit B (1260 aa).

The protein belongs to the helicase family. AddB/RexB type 2 subfamily. As to quaternary structure, heterodimer of AddA and RexB. It depends on Mg(2+) as a cofactor.

Functionally, the heterodimer acts as both an ATP-dependent DNA helicase and an ATP-dependent, dual-direction single-stranded exonuclease. Recognizes the chi site generating a DNA molecule suitable for the initiation of homologous recombination. This subunit has 5' -&gt; 3' nuclease activity but not helicase activity. The sequence is that of ATP-dependent helicase/deoxyribonuclease subunit B from Limosilactobacillus reuteri (strain DSM 20016) (Lactobacillus reuteri).